Consider the following 816-residue polypeptide: Bifunctional aspartokinase/homoserine dehydrogenase (816 aa).

The interval 1–250 (MKLLKFGGTS…VPNARLLKSI (250 aa)) is aspartokinase. The interface stretch occupies residues 251 to 471 (SYQEAMELSY…FNKKTIHMFL (221 aa)). In terms of domain architecture, ACT spans 402-479 (IVGSNIYKKH…FLIGIGGIGS (78 aa)). Residues 472-816 (IGIGGIGSTL…VFSDLLRTLS (345 aa)) form a homoserine dehydrogenase region. The NAD(+) site is built by glycine 476, isoleucine 477, and alanine 505. Isoleucine 477 is a binding site for NADP(+). Isoleucine 477 provides a ligand contact to NADPH. Residues lysine 508 and threonine 556 each coordinate NADP(+). Threonine 556 contributes to the NAD(+) binding site. 4 residues coordinate NADPH: threonine 556, serine 557, serine 578, and lysine 580. Residues serine 578 and lysine 580 each contribute to the NADP(+) site. Residues glutamate 607, valine 610, alanine 612, and leucine 614 each coordinate Na(+). 2 residues coordinate NADP(+): glycine 665 and glutamate 668. Residues glutamate 668 and aspartate 679 each coordinate L-homoserine. Residue lysine 683 is the Proton donor of the active site. NAD(+) is bound at residue glycine 799. Glycine 799 contributes to the NADP(+) binding site. Glycine 799 contacts NADPH.

The protein in the N-terminal section; belongs to the aspartokinase family. In the C-terminal section; belongs to the homoserine dehydrogenase family. Homotetramer. It depends on a metal cation as a cofactor.

It catalyses the reaction L-homoserine + NADP(+) = L-aspartate 4-semialdehyde + NADPH + H(+). The catalysed reaction is L-homoserine + NAD(+) = L-aspartate 4-semialdehyde + NADH + H(+). The enzyme catalyses L-aspartate + ATP = 4-phospho-L-aspartate + ADP. It participates in amino-acid biosynthesis; L-lysine biosynthesis via DAP pathway; (S)-tetrahydrodipicolinate from L-aspartate: step 1/4. It functions in the pathway amino-acid biosynthesis; L-methionine biosynthesis via de novo pathway; L-homoserine from L-aspartate: step 1/3. The protein operates within amino-acid biosynthesis; L-methionine biosynthesis via de novo pathway; L-homoserine from L-aspartate: step 3/3. Its pathway is amino-acid biosynthesis; L-threonine biosynthesis; L-threonine from L-aspartate: step 1/5. It participates in amino-acid biosynthesis; L-threonine biosynthesis; L-threonine from L-aspartate: step 3/5. In terms of biological role, bifunctional aspartate kinase and homoserine dehydrogenase that catalyzes the first and the third steps toward the synthesis of lysine, methionine and threonine from aspartate. The chain is Bifunctional aspartokinase/homoserine dehydrogenase (thrA) from Buchnera aphidicola subsp. Acyrthosiphon pisum (strain APS) (Acyrthosiphon pisum symbiotic bacterium).